A 159-amino-acid chain; its full sequence is Ribosomal RNA large subunit methyltransferase H (159 aa).

S-adenosyl-L-methionine-binding positions include Leu-76, Gly-108, and 127-132; that span reads FGRMTL.

The protein belongs to the RNA methyltransferase RlmH family. As to quaternary structure, homodimer.

Its subcellular location is the cytoplasm. It catalyses the reaction pseudouridine(1915) in 23S rRNA + S-adenosyl-L-methionine = N(3)-methylpseudouridine(1915) in 23S rRNA + S-adenosyl-L-homocysteine + H(+). In terms of biological role, specifically methylates the pseudouridine at position 1915 (m3Psi1915) in 23S rRNA. The protein is Ribosomal RNA large subunit methyltransferase H of Lactococcus lactis subsp. cremoris (strain SK11).